Reading from the N-terminus, the 160-residue chain is Cyclic pyranopterin monophosphate synthase (160 aa).

Substrate is bound by residues L75–H77 and M113–E114. The active site involves D128.

The protein belongs to the MoaC family. In terms of assembly, homohexamer; trimer of dimers.

It catalyses the reaction (8S)-3',8-cyclo-7,8-dihydroguanosine 5'-triphosphate = cyclic pyranopterin phosphate + diphosphate. It functions in the pathway cofactor biosynthesis; molybdopterin biosynthesis. Catalyzes the conversion of (8S)-3',8-cyclo-7,8-dihydroguanosine 5'-triphosphate to cyclic pyranopterin monophosphate (cPMP). This chain is Cyclic pyranopterin monophosphate synthase, found in Haemophilus influenzae (strain PittEE).